The following is a 201-amino-acid chain: 3-isopropylmalate dehydratase small subunit (201 aa).

It belongs to the LeuD family. LeuD type 1 subfamily. Heterodimer of LeuC and LeuD.

The enzyme catalyses (2R,3S)-3-isopropylmalate = (2S)-2-isopropylmalate. The protein operates within amino-acid biosynthesis; L-leucine biosynthesis; L-leucine from 3-methyl-2-oxobutanoate: step 2/4. Catalyzes the isomerization between 2-isopropylmalate and 3-isopropylmalate, via the formation of 2-isopropylmaleate. This chain is 3-isopropylmalate dehydratase small subunit, found in Nitrobacter hamburgensis (strain DSM 10229 / NCIMB 13809 / X14).